Here is a 397-residue protein sequence, read N- to C-terminus: Elongation factor Tu (397 aa).

One can recognise a tr-type G domain in the interval lysine 10–valine 207. The interval glycine 19–threonine 26 is G1. Residue glycine 19–threonine 26 participates in GTP binding. A Mg(2+)-binding site is contributed by threonine 26. The tract at residues glycine 63–asparagine 67 is G2. The tract at residues aspartate 84 to glycine 87 is G3. Residues aspartate 84–histidine 88 and asparagine 139–aspartate 142 each bind GTP. The interval asparagine 139–aspartate 142 is G4. The tract at residues serine 177–leucine 179 is G5.

It belongs to the TRAFAC class translation factor GTPase superfamily. Classic translation factor GTPase family. EF-Tu/EF-1A subfamily. As to quaternary structure, monomer.

The protein resides in the cytoplasm. The enzyme catalyses GTP + H2O = GDP + phosphate + H(+). Its function is as follows. GTP hydrolase that promotes the GTP-dependent binding of aminoacyl-tRNA to the A-site of ribosomes during protein biosynthesis. In Tropheryma whipplei (strain TW08/27) (Whipple's bacillus), this protein is Elongation factor Tu.